The sequence spans 266 residues: Indole-3-glycerol phosphate synthase (266 aa).

Belongs to the TrpC family.

The catalysed reaction is 1-(2-carboxyphenylamino)-1-deoxy-D-ribulose 5-phosphate + H(+) = (1S,2R)-1-C-(indol-3-yl)glycerol 3-phosphate + CO2 + H2O. Its pathway is amino-acid biosynthesis; L-tryptophan biosynthesis; L-tryptophan from chorismate: step 4/5. The sequence is that of Indole-3-glycerol phosphate synthase from Opitutus terrae (strain DSM 11246 / JCM 15787 / PB90-1).